Reading from the N-terminus, the 500-residue chain is Probable malate:quinone oxidoreductase (500 aa).

It belongs to the MQO family. FAD is required as a cofactor.

The enzyme catalyses (S)-malate + a quinone = a quinol + oxaloacetate. It functions in the pathway carbohydrate metabolism; tricarboxylic acid cycle; oxaloacetate from (S)-malate (quinone route): step 1/1. This chain is Probable malate:quinone oxidoreductase, found in Bordetella avium (strain 197N).